A 342-amino-acid chain; its full sequence is S-methyl-5'-thioadenosine phosphorylase (342 aa).

Phosphate-binding positions include Thr51, 99 to 100 (RH), and 132 to 133 (SA). A substrate-binding site is contributed by Met234. Position 235 (Ser235) interacts with phosphate. 258-260 (DYD) is a binding site for substrate.

The protein belongs to the PNP/MTAP phosphorylase family. MTAP subfamily. As to quaternary structure, homotrimer.

It localises to the cytoplasm. Its subcellular location is the nucleus. The catalysed reaction is S-methyl-5'-thioadenosine + phosphate = 5-(methylsulfanyl)-alpha-D-ribose 1-phosphate + adenine. Its pathway is amino-acid biosynthesis; L-methionine biosynthesis via salvage pathway; S-methyl-5-thio-alpha-D-ribose 1-phosphate from S-methyl-5'-thioadenosine (phosphorylase route): step 1/1. Functionally, catalyzes the reversible phosphorylation of S-methyl-5'-thioadenosine (MTA) to adenine and 5-methylthioribose-1-phosphate. Involved in the breakdown of MTA, a major by-product of polyamine biosynthesis. Responsible for the first step in the methionine salvage pathway after MTA has been generated from S-adenosylmethionine. Has broad substrate specificity with 6-aminopurine nucleosides as preferred substrates. The protein is S-methyl-5'-thioadenosine phosphorylase of Aspergillus fumigatus (strain ATCC MYA-4609 / CBS 101355 / FGSC A1100 / Af293) (Neosartorya fumigata).